A 141-amino-acid chain; its full sequence is Cystatin (141 aa).

The signal sequence occupies residues 1–26 (MLHSQLPVAAPLRLLCALLLLPSVTM). Residues 29 to 129 (GGLSPRSVTD…CRFQVWSRPW (101 aa)) enclose the Cystatin domain. The short motif at 73–77 (QVVTG) is the Secondary area of contact element. 2 disulfide bridges follow: Cys-91/Cys-107 and Cys-120/Cys-140.

It belongs to the cystatin family. In terms of tissue distribution, expressed at a low level by the venom gland (at protein level).

It is found in the secreted. Its function is as follows. Inhibits various C1 cysteine proteases including cathepsin L, papain and cathepsin B. This protein has no toxic activity and its function in the venom is unknown. It may play a role as a housekeeping or regulatory protein. In Hoplocephalus stephensii (Stephens's banded snake), this protein is Cystatin.